The chain runs to 326 residues: MEYTYLGRTGLRVSRLCLGTMNFGVDTDEKTAFRIMDEALDNGIQFFDTANIYGWGKNAGLTESIIGKWFAQGGQRREKVVLATKVYEPISDPNDGPNDMRGLSLYKIRRHLEGSLKRLQTDHIELYQMHHIDRRTPWDEIWEAFETQVRSGKVDYIGSSNFAGWHLVKAQAEAEKRRFMGLVTEQHKYSLLERTAEMEVLPAARDLGLGVVAWSPLAGGLLGGKALKSNAGTRTAKRADLIEKHRLQLEKFSDLCKELGEKEANVALAWVLANPVLTAPIIGPRTVEQLRDTIKAVEISLDKEILRMLNDIFPGPGGETPEAYAW.

The active-site Proton donor is Tyr-53. Position 215–225 (215–225 (SPLAGGLLGGK)) interacts with NADP(+). Residues 242 to 305 (IEKHRLQLEK…AVEISLDKEI (64 aa)) are a coiled coil.

Belongs to the aldo/keto reductase family. Aldo/keto reductase 2 subfamily.

This is an uncharacterized protein from Bacillus subtilis (strain 168).